We begin with the raw amino-acid sequence, 208 residues long: uncharacterized protein (208 aa).

The first 34 residues, 1–34 (MPSHCRERLPFALHFFAVAYGASLWILGSHGLAA), serve as a signal peptide directing secretion.

This is an uncharacterized protein from Sinorhizobium fredii (strain NBRC 101917 / NGR234).